Consider the following 231-residue polypeptide: Large ribosomal subunit protein uL1 (231 aa).

It belongs to the universal ribosomal protein uL1 family. As to quaternary structure, part of the 50S ribosomal subunit.

Functionally, binds directly to 23S rRNA. The L1 stalk is quite mobile in the ribosome, and is involved in E site tRNA release. Protein L1 is also a translational repressor protein, it controls the translation of the L11 operon by binding to its mRNA. This is Large ribosomal subunit protein uL1 from Chromobacterium violaceum (strain ATCC 12472 / DSM 30191 / JCM 1249 / CCUG 213 / NBRC 12614 / NCIMB 9131 / NCTC 9757 / MK).